The sequence spans 247 residues: Transmembrane protein 33 (247 aa).

A2 bears the N-acetylalanine mark. The Lumenal portion of the chain corresponds to 2–31 (ADTTPNGPQGAGAVQFMMTNKLDTAMWLSR). The helical transmembrane segment at 32–52 (LFTVYCSALFVLPLLGLHEAA) threads the bilayer. Topologically, residues 53 to 100 (SFYQRALLANALTSALRLHQRLPHFQLSRAFLAQALLEDSCHYLLYSL) are cytoplasmic. The helical transmembrane segment at 101–121 (IFVNSYPVTMSIFPVLLFSLL) threads the bilayer. Residues 122-155 (HAATYTKKVLDAKGSNSLPLLRSVLDKLSTNQQN) lie on the Lumenal side of the membrane. The helical transmembrane segment at 156–176 (ILKFIACNEIFLMPATVFMLF) threads the bilayer. At 177–247 (SGQGSLLQPF…FISRLAPTVA (71 aa)) the chain is on the cytoplasmic side.

It belongs to the PER33/POM33 family. As to quaternary structure, interacts with EIF2AK3. Interacts with ARL6IP1, isoform RTN1-A of RTN1, isoform RTN2-B of RTN2, isoform 3 of RTN3 and isoform 3 of RTN4. Interacts with RNF5. Interacts with RNF26. Interacts with PKD2. Highly expressed in the liver and significantly in brain, lungs and kidneys.

It is found in the endoplasmic reticulum membrane. The protein resides in the melanosome. Its subcellular location is the nucleus envelope. Acts as a regulator of the tubular endoplasmic reticulum (ER) network by modulating intracellular calcium homeostasis. Mechanistically, stimulates PKD2 calcium-dependent activity. Suppresses the RTN3/4-induced formation of the ER tubules. Positively regulates PERK-mediated and IRE1-mediated unfolded protein response signaling. Plays an essential role in VEGF-mediated release of Ca(2+) from ER stores during angiogenesis. Also plays a role in the modulation of innate immune signaling through the cGAS-STING pathway by interacting with RNF26. Participates in lipid metabolism by acting as a downstream effector of the pyruvate kinase/PKM. Forms a complex with RNF5 to facilitate polyubiquitination and subsequent degradation of SCAP on the ER membrane. The protein is Transmembrane protein 33 (Tmem33) of Rattus norvegicus (Rat).